The chain runs to 134 residues: Profilin-2 (134 aa).

A disulfide bridge connects residues cysteine 13 and cysteine 118. Residues 84–100 carry the Involved in PIP2 interaction motif; the sequence is AVIRGKKGSGGITIKKT. The residue at position 114 (threonine 114) is a Phosphothreonine.

This sequence belongs to the profilin family. In terms of assembly, occurs in many kinds of cells as a complex with monomeric actin in a 1:1 ratio. In terms of processing, phosphorylated by MAP kinases.

It is found in the cytoplasm. Its subcellular location is the cytoskeleton. Functionally, binds to actin and affects the structure of the cytoskeleton. At high concentrations, profilin prevents the polymerization of actin, whereas it enhances it at low concentrations. This Olea europaea (Common olive) protein is Profilin-2.